Consider the following 158-residue polypeptide: UPAR/Ly6 domain-containing protein crim (158 aa).

Residues 1–22 form the signal peptide; that stretch reads MHYHTNLIAALLLAALIHEGSA. At 23–136 the chain is on the extracellular side; that stretch reads IWCYRCTSAT…FCFLDHRCNG (114 aa). Asparagine 107 is a glycosylation site (N-linked (GlcNAc...) asparagine). Asparagine 135 is lipidated: GPI-anchor amidated asparagine. Positions 136–158 are cleaved as a propeptide — removed in mature form; that stretch reads GASGLQTSAVIGLLTLIPALLLR. The chain crosses the membrane as a helical span at residues 137–157; it reads ASGLQTSAVIGLLTLIPALLL. Position 158 (arginine 158) is a topological domain, cytoplasmic.

Belongs to the quiver family.

It is found in the membrane. Functionally, required for septate junction assembly possibly by organizing the preassembly and transport of septate junction proteins. Involved in epithelial cell septate junction-mediated paracellular barrier functions of trachea, hindgut and salivary gland. This is UPAR/Ly6 domain-containing protein crim from Drosophila melanogaster (Fruit fly).